An 839-amino-acid polypeptide reads, in one-letter code: Eukaryotic translation initiation factor 3 subunit C (839 aa).

The segment at 1–93 (MSRFFVAGYN…DSDSEDEGRR (93 aa)) is disordered. 2 stretches are compositionally biased toward acidic residues: residues 14–27 (SSEE…DEEL) and 34–58 (GEQE…SDSD). One can recognise a PCI domain in the interval 585–759 (FHQHINLELL…AFIQFASTEP (175 aa)). Positions 783 to 839 (EKTSSNGYGKKQPQQQQQQQQQQQQQQQQQKDLLQEDNSRFRYANVNTNNDEFQTTA) are disordered. Residues 794–812 (QPQQQQQQQQQQQQQQQQQ) are compositionally biased toward low complexity. Residues 827–839 (NVNTNNDEFQTTA) are compositionally biased toward polar residues.

The protein belongs to the eIF-3 subunit C family. In terms of assembly, component of the eukaryotic translation initiation factor 3 (eIF-3) complex.

The protein localises to the cytoplasm. Component of the eukaryotic translation initiation factor 3 (eIF-3) complex, which is involved in protein synthesis of a specialized repertoire of mRNAs and, together with other initiation factors, stimulates binding of mRNA and methionyl-tRNAi to the 40S ribosome. The eIF-3 complex specifically targets and initiates translation of a subset of mRNAs involved in cell proliferation. The protein is Eukaryotic translation initiation factor 3 subunit C of Scheffersomyces stipitis (strain ATCC 58785 / CBS 6054 / NBRC 10063 / NRRL Y-11545) (Yeast).